A 600-amino-acid polypeptide reads, in one-letter code: Prostaglandin G/H synthase 1 (600 aa).

Positions methionine 1–serine 24 are cleaved as a signal peptide. Residues proline 32–threonine 70 form the EGF-like domain. Disulfide bonds link cysteine 36–cysteine 47, cysteine 37–cysteine 159, cysteine 41–cysteine 57, and cysteine 59–cysteine 69. An N-linked (GlcNAc...) asparagine glycan is attached at asparagine 68. Helical transmembrane passes span isoleucine 74–leucine 82, proline 86–leucine 92, arginine 97–alanine 105, and isoleucine 108–asparagine 122. Asparagine 144 is a glycosylation site (N-linked (GlcNAc...) asparagine). Catalysis depends on histidine 207, which acts as the Proton acceptor. The active-site For cyclooxygenase activity is tyrosine 385. Residue histidine 388 participates in heme b binding. N-linked (GlcNAc...) asparagine glycosylation occurs at asparagine 410. Cysteine 569 and cysteine 575 are disulfide-bonded.

This sequence belongs to the prostaglandin G/H synthase family. As to quaternary structure, homodimer. Heme b serves as cofactor.

It is found in the endoplasmic reticulum membrane. Its subcellular location is the microsome membrane. It catalyses the reaction (5Z,8Z,11Z,14Z)-eicosatetraenoate + AH2 + 2 O2 = prostaglandin H2 + A + H2O. The enzyme catalyses (5Z,8Z,11Z,14Z)-eicosatetraenoate + 2 O2 = prostaglandin G2. The catalysed reaction is prostaglandin G2 + AH2 = prostaglandin H2 + A + H2O. It carries out the reaction (9Z,12Z)-octadecadienoate + AH2 + O2 = (9R)-hydroxy-(10E,12Z)-octadecadienoate + A + H2O. It catalyses the reaction (9Z,12Z)-octadecadienoate + AH2 + O2 = (9S)-hydroxy-(10E,12Z)-octadecadienoate + A + H2O. The enzyme catalyses (9Z,12Z)-octadecadienoate + AH2 + O2 = (13S)-hydroxy-(9Z,11E)-octadecadienoate + A + H2O. The catalysed reaction is (9Z,12Z)-octadecadienoate + AH2 + O2 = (13R)-hydroxy-(9Z,11E)-octadecadienoate + A + H2O. It participates in lipid metabolism; prostaglandin biosynthesis. Its activity is regulated as follows. The cyclooxygenase activity is inhibited by nonsteroidal anti-inflammatory drugs (NSAIDs) including ibuprofen, flurbiprofen, ketoprofen, naproxen, flurbiprofen, anirolac, fenclofenac and diclofenac. Dual cyclooxygenase and peroxidase that plays an important role in the biosynthesis pathway of prostanoids, a class of C20 oxylipins mainly derived from arachidonate ((5Z,8Z,11Z,14Z)-eicosatetraenoate, AA, C20:4(n-6)), with a particular role in the inflammatory response. The cyclooxygenase activity oxygenates AA to the hydroperoxy endoperoxide prostaglandin G2 (PGG2), and the peroxidase activity reduces PGG2 to the hydroxy endoperoxide prostaglandin H2 (PGH2), the precursor of all 2-series prostaglandins and thromboxanes. This complex transformation is initiated by abstraction of hydrogen at carbon 13 (with S-stereochemistry), followed by insertion of molecular O2 to form the endoperoxide bridge between carbon 9 and 11 that defines prostaglandins. The insertion of a second molecule of O2 (bis-oxygenase activity) yields a hydroperoxy group in PGG2 that is then reduced to PGH2 by two electrons. Involved in the constitutive production of prostanoids in particular in the stomach and platelets. In gastric epithelial cells, it is a key step in the generation of prostaglandins, such as prostaglandin E2 (PGE2), which plays an important role in cytoprotection. In platelets, it is involved in the generation of thromboxane A2 (TXA2), which promotes platelet activation and aggregation, vasoconstriction and proliferation of vascular smooth muscle cells. Can also use linoleate (LA, (9Z,12Z)-octadecadienoate, C18:2(n-6)) as substrate and produce hydroxyoctadecadienoates (HODEs) in a regio- and stereospecific manner, being (9R)-HODE ((9R)-hydroxy-(10E,12Z)-octadecadienoate) and (13S)-HODE ((13S)-hydroxy-(9Z,11E)-octadecadienoate) its major products. The sequence is that of Prostaglandin G/H synthase 1 (PTGS1) from Ovis aries (Sheep).